An 88-amino-acid chain; its full sequence is Small ribosomal subunit protein uS15c (88 aa).

It belongs to the universal ribosomal protein uS15 family. Part of the 30S ribosomal subunit.

The protein resides in the plastid. Its subcellular location is the chloroplast. The sequence is that of Small ribosomal subunit protein uS15c (rps15) from Cycas taitungensis (Prince sago).